Here is a 122-residue protein sequence, read N- to C-terminus: UPF0231 protein VIBHAR_03438 (122 aa).

Belongs to the UPF0231 family.

The chain is UPF0231 protein VIBHAR_03438 from Vibrio campbellii (strain ATCC BAA-1116).